The following is a 362-amino-acid chain: Nuclear hormone receptor family member nhr-77 (362 aa).

Residues 8-82 (DPICPVCEFP…AGMKRNLVKQ (75 aa)) constitute a DNA-binding region (nuclear receptor). NR C4-type zinc fingers lie at residues 11–32 (CPVCEFPSNVELHFGGLVCGAC) and 48–69 (CEKNNQCKGMRKNCRACRFDYC). In terms of domain architecture, NR LBD spans 145 to 362 (EAEKDVSKIL…KLYIQLGLPF (218 aa)).

The protein belongs to the nuclear hormone receptor family.

The protein localises to the nucleus. Orphan nuclear receptor. This is Nuclear hormone receptor family member nhr-77 (nhr-77) from Caenorhabditis elegans.